A 33-amino-acid polypeptide reads, in one-letter code: Dermaseptin-H6 (33 aa).

Leucine 33 carries the post-translational modification Leucine amide.

Expressed by the skin glands.

The protein localises to the secreted. Has antimicrobial activity. This is Dermaseptin-H6 from Pithecopus hypochondrialis (Orange-legged leaf frog).